We begin with the raw amino-acid sequence, 224 residues long: UPF0758 protein Rpic_2712 (224 aa).

The region spanning 102 to 224 (TFESAQSVKD…VYGFLEHGKM (123 aa)) is the MPN domain. Residues histidine 173, histidine 175, and aspartate 186 each contribute to the Zn(2+) site. The JAMM motif signature appears at 173 to 186 (HNHPTGNTEPSESD).

Belongs to the UPF0758 family.

The polypeptide is UPF0758 protein Rpic_2712 (Ralstonia pickettii (strain 12J)).